A 143-amino-acid chain; its full sequence is Large ribosomal subunit protein uL11 (143 aa).

It belongs to the universal ribosomal protein uL11 family. As to quaternary structure, part of the ribosomal stalk of the 50S ribosomal subunit. Interacts with L10 and the large rRNA to form the base of the stalk. L10 forms an elongated spine to which L12 dimers bind in a sequential fashion forming a multimeric L10(L12)X complex. Post-translationally, one or more lysine residues are methylated.

Forms part of the ribosomal stalk which helps the ribosome interact with GTP-bound translation factors. In Koribacter versatilis (strain Ellin345), this protein is Large ribosomal subunit protein uL11.